Reading from the N-terminus, the 309-residue chain is MELQFLGTGAGQPSKARNVSSLVLKLLDEINEVWMFDCGEGTQRQILETTIKPRKVKKIFITHMHGDHIFGLPGFLASRSFQSSEEQTDLEVYGPVGIKQYVMTSIRTSGTRLSYHVHFKEIDENSLGLVMEDDKFAVYADKLDHTIFCVGYRVVQKDLEGTLDAEALKAAGVPFGPLFGQIKNGQDVVLEDGTKIIAKDFISAPKKGKVITILGDTRKTNASVRLGLGADVLVHESTYGKGDEKIAKSHGHSTNMQAAQVARDASAKRLLLNHVSARFLGRDIGKMAADAKTIFENTHIVRDLEEVEI.

Residues H63, H65, D67, H68, H145, D216, and H274 each coordinate Zn(2+). D67 acts as the Proton acceptor in catalysis.

This sequence belongs to the RNase Z family. In terms of assembly, homodimer. Requires Zn(2+) as cofactor.

It catalyses the reaction Endonucleolytic cleavage of RNA, removing extra 3' nucleotides from tRNA precursor, generating 3' termini of tRNAs. A 3'-hydroxy group is left at the tRNA terminus and a 5'-phosphoryl group is left at the trailer molecule.. Its function is as follows. Zinc phosphodiesterase, which displays some tRNA 3'-processing endonuclease activity. Probably involved in tRNA maturation, by removing a 3'-trailer from precursor tRNA. The polypeptide is Ribonuclease Z (Streptococcus thermophilus (strain CNRZ 1066)).